A 208-amino-acid chain; its full sequence is Outer-membrane lipoprotein carrier protein (208 aa).

Positions 1 to 25 (MKKLFSAKLFSALVLSFSLFSTAHA) are cleaved as a signal peptide.

The protein belongs to the LolA family. As to quaternary structure, monomer.

The protein localises to the periplasm. Functionally, participates in the translocation of lipoproteins from the inner membrane to the outer membrane. Only forms a complex with a lipoprotein if the residue after the N-terminal Cys is not an aspartate (The Asp acts as a targeting signal to indicate that the lipoprotein should stay in the inner membrane). This Vibrio campbellii (strain ATCC BAA-1116) protein is Outer-membrane lipoprotein carrier protein.